The chain runs to 179 residues: Inosine/xanthosine triphosphatase (179 aa).

Glu71 contributes to the Mg(2+) binding site. Residue Glu71–Ala72 participates in substrate binding.

The protein belongs to the YjjX NTPase family. In terms of assembly, homodimer. Mg(2+) serves as cofactor. The cofactor is Mn(2+).

The catalysed reaction is XTP + H2O = XDP + phosphate + H(+). The enzyme catalyses ITP + H2O = IDP + phosphate + H(+). Functionally, phosphatase that hydrolyzes non-canonical purine nucleotides such as XTP and ITP to their respective diphosphate derivatives. Probably excludes non-canonical purines from DNA/RNA precursor pool, thus preventing their incorporation into DNA/RNA and avoiding chromosomal lesions. The protein is Inosine/xanthosine triphosphatase of Shewanella sp. (strain ANA-3).